The chain runs to 695 residues: Transketolase (695 aa).

Substrate is bound at residue His37. Thiamine diphosphate is bound by residues His77 and 126 to 128; that span reads GPL. Asp164 contributes to the Mg(2+) binding site. Thiamine diphosphate-binding residues include Gly165 and Asn194. Mg(2+) contacts are provided by Asn194 and Ile196. Substrate contacts are provided by His268, Arg361, and Ser388. His268 contributes to the thiamine diphosphate binding site. The active-site Proton donor is Glu415. Phe441 is a thiamine diphosphate binding site. Substrate-binding residues include His465, Asp473, and Arg524.

Belongs to the transketolase family. As to quaternary structure, homodimer. Mg(2+) serves as cofactor. Ca(2+) is required as a cofactor. Requires Mn(2+) as cofactor. It depends on Co(2+) as a cofactor. The cofactor is thiamine diphosphate.

It catalyses the reaction D-sedoheptulose 7-phosphate + D-glyceraldehyde 3-phosphate = aldehydo-D-ribose 5-phosphate + D-xylulose 5-phosphate. The protein operates within carbohydrate biosynthesis; Calvin cycle. Catalyzes the transfer of a two-carbon ketol group from a ketose donor to an aldose acceptor, via a covalent intermediate with the cofactor thiamine pyrophosphate. The chain is Transketolase (cbbT) from Sinorhizobium medicae (strain WSM419) (Ensifer medicae).